Reading from the N-terminus, the 297-residue chain is Protease HtpX homolog (297 aa).

The next 2 membrane-spanning stretches (helical) occupy residues 5 to 25 (IFLF…VLTI) and 43 to 63 (LMAL…ISLG). H154 contacts Zn(2+). Residue E155 is part of the active site. H158 contacts Zn(2+). The next 2 helical transmembrane spans lie at 169-189 (LLQG…AWVA) and 203-223 (FIAM…VVFA). E229 contributes to the Zn(2+) binding site.

It belongs to the peptidase M48B family. It depends on Zn(2+) as a cofactor.

The protein resides in the cell membrane. The sequence is that of Protease HtpX homolog from Bacillus velezensis (strain DSM 23117 / BGSC 10A6 / LMG 26770 / FZB42) (Bacillus amyloliquefaciens subsp. plantarum).